The primary structure comprises 254 residues: Methylthioribulose-1-phosphate dehydratase (254 aa).

Position 110 (Cys-110) interacts with substrate. His-127 and His-129 together coordinate Zn(2+). Catalysis depends on Glu-156, which acts as the Proton donor/acceptor. His-212 contacts Zn(2+).

The protein belongs to the aldolase class II family. MtnB subfamily. It depends on Zn(2+) as a cofactor.

Its subcellular location is the cytoplasm. It catalyses the reaction 5-(methylsulfanyl)-D-ribulose 1-phosphate = 5-methylsulfanyl-2,3-dioxopentyl phosphate + H2O. Its pathway is amino-acid biosynthesis; L-methionine biosynthesis via salvage pathway; L-methionine from S-methyl-5-thio-alpha-D-ribose 1-phosphate: step 2/6. Catalyzes the dehydration of methylthioribulose-1-phosphate (MTRu-1-P) into 2,3-diketo-5-methylthiopentyl-1-phosphate (DK-MTP-1-P). This Talaromyces marneffei (strain ATCC 18224 / CBS 334.59 / QM 7333) (Penicillium marneffei) protein is Methylthioribulose-1-phosphate dehydratase.